The primary structure comprises 111 residues: Protein BEX3 (111 aa).

Residues 1–63 (MANIHQENEE…RQINDGMGGD (63 aa)) form a disordered region. The interval 68–93 (EIFMEEMREIRRKLRELQLRNCLRIL) is interaction with p75NTR/NGFR. The interaction with 14-3-3 epsilon stretch occupies residues 68-111 (EIFMEEMREIRRKLRELQLRNCLRILMGELSNHHDHHDEFCLMP). Residues 77–87 (IRRKLRELQLR) carry the Nuclear export signal motif. The tract at residues 100 to 104 (HHDHH) is his cluster. Residue cysteine 108 participates in Zn(2+) binding.

The protein belongs to the BEX family. Self-associates. Binds to the DEATH domain of p75NTR/NGFR. Interacts with 14-3-3 epsilon (YWHAE). Interacts with DIABLO/SMAC. Post-translationally, ubiquitinated. Degraded by the proteasome. Found in ovarian granulosa cells, testis, prostate and seminal vesicle tissue. High levels also detected in liver.

Its subcellular location is the nucleus. The protein resides in the cytoplasm. It localises to the cytosol. Functionally, may be a signaling adapter molecule involved in NGFR/p75NTR-mediated apoptosis induced by NGF. Plays a role in zinc-triggered neuronal death. In absence of reductive stress, acts as a pseudosubstrate for the CRL2(FEM1B) complex: associates with FEM1B via zinc, thereby preventing association between FEM1B and its substrates. The protein is Protein BEX3 of Homo sapiens (Human).